Reading from the N-terminus, the 2027-residue chain is Mediator of RNA polymerase II transcription subunit 12 (2027 aa).

Tyrosine 13 carries the post-translational modification Phosphotyrosine. Disordered regions lie at residues 170–191, 474–516, 538–563, and 1088–1113; these read QSTSTLPTTPAPQPPTSSTPST, GAPG…MDID, MPCEGKGSPSPEKPDVEKEVKPPPKE, and TVTGGTEELPEEEGGGGSGGRRQGGR. 4 positions are modified to phosphoserine: serine 482, serine 512, serine 545, and serine 547. Positions 549-563 are enriched in basic and acidic residues; sequence EKPDVEKEVKPPPKE. Residues serine 1105 and serine 1116 each carry the phosphoserine modification. The segment covering 1241–1258 has biased composition (low complexity); the sequence is AETGSSSGSTASNMPSSS. 3 disordered regions span residues 1241 to 1262, 1297 to 1321, and 1585 to 1676; these read AETGSSSGSTASNMPSSSKTKP, ELEKGQHLGSSSRKERDRQKQKSMS, and YLEP…PGSI. Composition is skewed to basic and acidic residues over residues 1297 to 1316 and 1605 to 1618; these read ELEKGQHLGSSSRKERDRQK and EPEKKAPEPPKTDK. Residues 1463–1901 form an interaction with CTNNB1 and GLI3 region; sequence LAKKLQKELG…VRSTAILPEQ (439 aa). Over residues 1631–1640 the composition is skewed to basic residues; it reads KKSTKGKKRS. Lysine 1645 carries the post-translational modification N6-acetyllysine. Arginine 1746 is modified (asymmetric dimethylarginine; alternate). At arginine 1746 the chain carries Omega-N-methylarginine; alternate. An Omega-N-methylarginine modification is found at arginine 1757. The tract at residues 1805-1848 is disordered; it reads QHTGPAGTMVPPSYSSQPYQSTHPSTNPTLVDPTRHLQQRPSGY. A compositionally biased stretch (low complexity) spans 1815–1830; sequence PPSYSSQPYQSTHPST. An asymmetric dimethylarginine mark is found at arginine 1844 and arginine 1865. Composition is skewed to low complexity over residues 1965 to 1975, 1983 to 1999, and 2008 to 2021; these read QHQQQQQQQAA, SQPQFQRQGLQQTQQQQ, and LQQQLSNTQPQPST. Disordered regions lie at residues 1965–1999 and 2008–2027; these read QHQQQQQQQAAPPQPQPQSQPQFQRQGLQQTQQQQ and LQQQLSNTQPQPSTNIFGRY.

Belongs to the Mediator complex subunit 12 family. As to quaternary structure, component of the Mediator complex, which is composed of MED1, MED4, MED6, MED7, MED8, MED9, MED10, MED11, MED12, MED13, MED13L, MED14, MED15, MED16, MED17, MED18, MED19, MED20, MED21, MED22, MED23, MED24, MED25, MED26, MED27, MED29, MED30, MED31, CCNC, CDK8 and CDC2L6/CDK11. The MED12, MED13, CCNC and CDK8 subunits form a distinct module termed the CDK8 module. Mediator containing the CDK8 module is less active than Mediator lacking this module in supporting transcriptional activation. Individual preparations of the Mediator complex lacking one or more distinct subunits have been variously termed ARC, CRSP, DRIP, PC2, SMCC and TRAP. Also interacts with CTNNB1 and GLI3.

The protein localises to the nucleus. Component of the Mediator complex, a coactivator involved in the regulated transcription of nearly all RNA polymerase II-dependent genes. Mediator functions as a bridge to convey information from gene-specific regulatory proteins to the basal RNA polymerase II transcription machinery. Mediator is recruited to promoters by direct interactions with regulatory proteins and serves as a scaffold for the assembly of a functional preinitiation complex with RNA polymerase II and the general transcription factors. This subunit may specifically regulate transcription of targets of the Wnt signaling pathway and SHH signaling pathway. The protein is Mediator of RNA polymerase II transcription subunit 12 (MED12) of Pan troglodytes (Chimpanzee).